The chain runs to 361 residues: 45 kDa calcium-binding protein (361 aa).

The first 35 residues, 1 to 35 (MVWLVAMTPRQSSLCGLAAHGLWFLGLVLLMDATA), serve as a signal peptide directing secretion. Asparagine 39 carries N-linked (GlcNAc...) asparagine glycosylation. EF-hand domains lie at 97–132 (RSRRKLMVIFSKVDVNTDRRISAKEMQHWIMEKTAE) and 136–171 (EAVKENKLHFRAVDPDGDGHVSWDEYKVKFLASKGH). Serine 98 bears the Phosphoserine mark. Residues aspartate 110, asparagine 112, aspartate 114, arginine 116, glutamate 121, aspartate 149, aspartate 151, aspartate 153, histidine 155, and glutamate 160 each contribute to the Ca(2+) site. Phosphothreonine is present on threonine 192. EF-hand domains follow at residues 196–231 (LGNLRDRWYQADNPPADLLLTEDEFLSFLHPEHSRG), 232–267 (MLKFMVKEIFRDLDQDGDKQLSLPEFISLPVGTVEN), 277–312 (WVKDRKKEFEELIDSNHDGIVTMEELENYMDPMNEY), and 313–348 (NALNEAKQMIAIADENQNHHLEPEEILKYSEFFTGS). Aspartate 212 provides a ligand contact to Ca(2+). Threonine 216 is subject to Phosphothreonine. Residues glutamate 219, aspartate 245, aspartate 247, aspartate 249, glutamine 251, and glutamate 256 each coordinate Ca(2+). Residue threonine 264 is modified to Phosphothreonine. Residues aspartate 290, asparagine 292, and aspartate 294 each coordinate Ca(2+). Threonine 298 carries the phosphothreonine modification. Glutamate 301, aspartate 326, asparagine 328, asparagine 330, histidine 332, and glutamate 337 together coordinate Ca(2+). Residues 308–361 (PMNEYNALNEAKQMIAIADENQNHHLEPEEILKYSEFFTGSKLMDYARNVHEEF) are necessary for intracellular retention in Golgi apparatus lumen.

This sequence belongs to the CREC family. In terms of tissue distribution, ubiquitous.

The protein localises to the golgi apparatus lumen. Functionally, may regulate calcium-dependent activities in the endoplasmic reticulum lumen or post-ER compartment. This Mus musculus (Mouse) protein is 45 kDa calcium-binding protein (Sdf4).